The sequence spans 524 residues: Calcium-dependent protein kinase 1 (524 aa).

Residues 1-34 (MGCSQSSNVKDFKTRRSKFTNGNNYGKSGNNKNS) form a disordered region. A lipid anchor (N-myristoyl glycine) is attached at G2. C3 carries S-palmitoyl cysteine lipidation. The short motif at 10–20 (KDFKTRRSKFT) is the Basic cluster involved in membrane binding element. S17, S28, and S34 each carry phosphoserine; by autocatalysis. Residues 21 to 32 (NGNNYGKSGNNK) are compositionally biased toward low complexity. In terms of domain architecture, Protein kinase spans 56-325 (YFKVRKLGSG…AKEALNSKWI (270 aa)). ATP-binding positions include 62–70 (LGSGAYGEV) and K85. The residue at position 64 (S64) is a Phosphoserine; by PKG; by autocatalysis. T100 carries the phosphothreonine; by autocatalysis modification. S118 is modified (phosphoserine; by autocatalysis). Residue D191 is the Proton acceptor of the active site. A Phosphoserine modification is found at S217. Phosphoserine; by autocatalysis is present on S220. T231 bears the Phosphothreonine; by PKG; by autocatalysis mark. S335 carries the post-translational modification Phosphoserine; by autocatalysis. The J domain autoinhibitory motif signature appears at 346 to 353 (NMRKFEGS). Residues 346-364 (NMRKFEGSQKLAQAAILFI) are j domain. Positions 354–364 (QKLAQAAILFI) match the J domain interacts with the EF-hand domains motif. 4 consecutive EF-hand domains span residues 372–407 (EERK…LRSF), 416–451 (NVEE…KQIL), 452–487 (FSEE…TSIS), and 488–521 (EQMW…ICDN). Ca(2+) contacts are provided by D385, N387, D389, Q391, E396, D429, D431, N433, Y435, E440, D465, D467, S469, K471, E476, D499, N501, D503, M505, and E510.

It belongs to the protein kinase superfamily. Ser/Thr protein kinase family. CDPK subfamily. In terms of assembly, monomer. Forms a high molecular weight (250 and 400 kDa) complex. Forms a complex composed of CDPK1, PKA regulatory subunit PKAr and 14-3-3I; the complex is formed in merozoites in response to low extracellular level of K(+) and may play a role in microneme secretion. Interacts (when phosphorylated) with 14-3-3I in a Ca(2+)-independent manner; the interaction does not regulate CDPK1 catalytic activity but is required for merozoite invasion of host erythrocytes. Interacts with PKA regulatory subunit PKAr; in a Ca(2+)-dependent manner. Interacts with SERA5 p50 in the late schizont stage. Interacts with inner membrane complex protein IMC1g in late schizonts. Interacts with rhoptry protein RhopH3 in merozoites. The cofactor is Mg(2+). Post-translationally, myristoylated. Myristoylation, palmitoylation and the basic cluster motif are required for the localization to the parasitophorous vacuole membrane. In terms of processing, palmitoylated. Palmitoylation increases in merozoites in response to low level of extracellular K(+) in the host blood. Myristoylation, palmitoylation and the basic cluster motif are required for the localization to the parasitophorous vacuole membrane. Phosphorylation at Ser-64 occurs at late schizont stage and regulates CDPK1 protein-protein interaction. Phosphorylated at Ser-28, Ser-34 and Ser-64 in merozoites in response to low extracellular level of K(+). Phosphorylation at Thr-231 may regulate CDPK1 kinase activity. Phosphorylation increases in response to an increase in intracellular Ca(2+) levels. Autophosphorylated in vitro. Autophosphorylation does not affect membrane localization in vitro.

Its subcellular location is the membrane. It localises to the cell membrane. It is found in the parasitophorous vacuole membrane. The protein localises to the cytoplasm. The protein resides in the cell projection. Its subcellular location is the cilium. It localises to the flagellum. It is found in the host cell membrane. It carries out the reaction L-seryl-[protein] + ATP = O-phospho-L-seryl-[protein] + ADP + H(+). The enzyme catalyses L-threonyl-[protein] + ATP = O-phospho-L-threonyl-[protein] + ADP + H(+). With respect to regulation, activated by calcium. Upon calcium binding to the EF-hand domains, the C-terminus of the junction domain (J domain) undergoes a conformational change which results in the dissociation of the pseudo-substrate inhibitory motif from the catalytic domain. This, in turn may facilitate the autophosphorylation of the activation loop at Thr-231, which leads to the kinase activation. May be negatively regulated by PKA-mediated phosphorylation. Inhibited by purfalcamine. Its function is as follows. Calcium-dependent protein kinase which acts as a sensor and effector of intracellular Ca(2+) levels probably in part downstream of cGMP-activated PKG kinase. By phosphorylating various proteins, required for microneme secretion and thus merozoite egress from and invasion of host erythrocytes. During gametogenesis, essential for the development of both male and female gametes. Phosphorylates SERA5 p50 which enhances SERA5 p50 protease activity; however, SERA5 p50 protease activity has been shown in other studies to be controversial. Probably by phosphorylating SERA5 p50, plays a role in merozoite egress from host erythrocytes. Probably prior or during merozoite invasion of host erythrocytes, phosphorylates rhoptry protein RhopH3 which is required for RhopH3 localization to rhoptries and for its secretion. Probably in late schizonts, phosphorylates myosin A tail domain-interacting protein MTIP and glideosome-associated protein 45 GAP45, both of which are components of the motor complex that generates the force required by the parasite to invade host cells. In late schizonts, phosphorylates inner membrane complex protein IMC1g. In late schizonts, phosphorylates PKA regulatory subunit PKAr in a calcium-dependent manner, which may contribute to the dissociation of regulatory PKAr and catalytic PKAc subunits and promote the activation of PKAc. May phosphorylate raf kinase inhibitory protein RKIP which in turn may regulate CDPK1 catalytic activity. May phosphorylate proteins of the host erythrocyte membranes. The chain is Calcium-dependent protein kinase 1 from Plasmodium falciparum (isolate 3D7).